The primary structure comprises 327 residues: Zinc transport protein ZntB (327 aa).

Over 1–273 the chain is Cytoplasmic; the sequence is MEAIKGSDVN…ARRTYTMSLM (273 aa). The chain crosses the membrane as a helical span at residues 274-294; the sequence is AMVFLPSTFLTGLFGVNLGGI. Residues 295 to 300 are Periplasmic-facing; sequence PGGGWQ. Residues 301 to 321 form a helical membrane-spanning segment; it reads FGFSIFCILLVVLIGGVALWL. At 322 to 327 the chain is on the cytoplasmic side; the sequence is HRSKWL.

Belongs to the CorA metal ion transporter (MIT) (TC 1.A.35) family.

It is found in the cell inner membrane. It carries out the reaction Zn(2+)(out) + H(+)(out) = Zn(2+)(in) + H(+)(in). In terms of biological role, zinc transporter. Acts as a Zn(2+):proton symporter, which likely mediates zinc ion uptake. The sequence is that of Zinc transport protein ZntB from Escherichia coli O8 (strain IAI1).